The primary structure comprises 119 residues: Beta-2-microglobulin (119 aa).

Residues 1 to 20 (MARSVAVVFLMLLSVVCLDA) form the signal peptide. An Ig-like C1-type domain is found at 25–114 (PQVQVYTRHP…TTLKEPKVVT (90 aa)). C45 and C100 form a disulfide bridge.

It belongs to the beta-2-microglobulin family. As to quaternary structure, heterodimer of an alpha chain and a beta chain. Beta-2-microglobulin is the beta-chain of major histocompatibility complex class I molecules.

The protein resides in the secreted. Functionally, component of the class I major histocompatibility complex (MHC). Involved in the presentation of peptide antigens to the immune system. In Cricetulus griseus (Chinese hamster), this protein is Beta-2-microglobulin (B2M).